A 297-amino-acid chain; its full sequence is Bifunctional protein FolD 2 (297 aa).

NADP(+) contacts are provided by residues 173–175 (GKS), Ser198, and Ile239.

It belongs to the tetrahydrofolate dehydrogenase/cyclohydrolase family. In terms of assembly, homodimer.

The enzyme catalyses (6R)-5,10-methylene-5,6,7,8-tetrahydrofolate + NADP(+) = (6R)-5,10-methenyltetrahydrofolate + NADPH. It catalyses the reaction (6R)-5,10-methenyltetrahydrofolate + H2O = (6R)-10-formyltetrahydrofolate + H(+). It functions in the pathway one-carbon metabolism; tetrahydrofolate interconversion. Functionally, catalyzes the oxidation of 5,10-methylenetetrahydrofolate to 5,10-methenyltetrahydrofolate and then the hydrolysis of 5,10-methenyltetrahydrofolate to 10-formyltetrahydrofolate. The polypeptide is Bifunctional protein FolD 2 (Sinorhizobium medicae (strain WSM419) (Ensifer medicae)).